The sequence spans 107 residues: Large ribosomal subunit protein uL24 (107 aa).

Belongs to the universal ribosomal protein uL24 family. In terms of assembly, part of the 50S ribosomal subunit.

In terms of biological role, one of two assembly initiator proteins, it binds directly to the 5'-end of the 23S rRNA, where it nucleates assembly of the 50S subunit. Its function is as follows. One of the proteins that surrounds the polypeptide exit tunnel on the outside of the subunit. This Mesomycoplasma hyopneumoniae (strain 7448) (Mycoplasma hyopneumoniae) protein is Large ribosomal subunit protein uL24.